A 526-amino-acid chain; its full sequence is Transcription factor MYC1 (526 aa).

The interval 330–351 is disordered; sequence MFPSQNSGLNQDDPSDRRKENE. Positions 332-341 are enriched in polar residues; the sequence is PSQNSGLNQD. Residues 333–382 enclose the bHLH domain; sequence SQNSGLNQDDPSDRRKENEKFSVLRTMVPTVNEVDKESILNNTIKYLQEL.

Homodimer. Interacts with MYB75/PAP1, MYB90/PAP2, MYB4, MYB5, MYB6, MYB23, MYB82, MYB113, MYB114, TT2, MYB0/GL1, and MYB66/WER. As to expression, mostly expressed in developing seeds. Also detected in stems and leaves.

It is found in the nucleus. Functionally, trancsription activator, when associated with MYB75/PAP1 or MYB90/PAP2. This chain is Transcription factor MYC1 (BHLH12), found in Arabidopsis thaliana (Mouse-ear cress).